The primary structure comprises 342 residues: S-adenosylmethionine:tRNA ribosyltransferase-isomerase (342 aa).

It belongs to the QueA family. Monomer.

The protein resides in the cytoplasm. It catalyses the reaction 7-aminomethyl-7-carbaguanosine(34) in tRNA + S-adenosyl-L-methionine = epoxyqueuosine(34) in tRNA + adenine + L-methionine + 2 H(+). The protein operates within tRNA modification; tRNA-queuosine biosynthesis. Functionally, transfers and isomerizes the ribose moiety from AdoMet to the 7-aminomethyl group of 7-deazaguanine (preQ1-tRNA) to give epoxyqueuosine (oQ-tRNA). In Listeria monocytogenes serotype 4b (strain CLIP80459), this protein is S-adenosylmethionine:tRNA ribosyltransferase-isomerase.